We begin with the raw amino-acid sequence, 369 residues long: Glycine oxidase (369 aa).

FAD-binding positions include 14–15 (II), 34–35 (ES), 42–43 (TT), 47–49 (AGM), and V174. Residues R302 and R329 each contribute to the substrate site. Residue 327-333 (HFRNGIL) coordinates FAD.

The protein belongs to the DAO family. ThiO subfamily. As to quaternary structure, homotetramer. FAD is required as a cofactor.

Its subcellular location is the cytoplasm. The catalysed reaction is glycine + O2 + H2O = glyoxylate + H2O2 + NH4(+). The enzyme catalyses N-ethylglycine + O2 + H2O = ethylamine + glyoxylate + H2O2. It catalyses the reaction sarcosine + O2 + H2O = methylamine + glyoxylate + H2O2. It carries out the reaction D-alanine + O2 + H2O = pyruvate + H2O2 + NH4(+). The catalysed reaction is glyphosate + O2 + H2O = aminomethylphosphonate + glyoxylate + H2O2 + H(+). Its pathway is cofactor biosynthesis; thiamine diphosphate biosynthesis. With respect to regulation, is competitively inhibited by glycolate. In terms of biological role, catalyzes the FAD-dependent oxidative deamination of various amines and D-amino acids to yield the corresponding alpha-keto acids, ammonia/amine, and hydrogen peroxide. Oxidizes sarcosine (N-methylglycine), N-ethylglycine and glycine. Can also oxidize the herbicide glyphosate (N-phosphonomethylglycine). Displays lower activities on D-alanine, D-valine, D-proline and D-methionine. Does not act on L-amino acids and other D-amino acids. Is essential for thiamine biosynthesis since the oxidation of glycine catalyzed by ThiO generates the glycine imine intermediate (dehydroglycine) required for the biosynthesis of the thiazole ring of thiamine pyrophosphate. The sequence is that of Glycine oxidase from Bacillus subtilis (strain 168).